A 342-amino-acid chain; its full sequence is Heparan sulfate glucosamine 3-O-sulfotransferase 6 (342 aa).

The Cytoplasmic segment spans residues 1-31 (MAGSGGLGGGAGDLQGAGTGQGTALRALRAP). A helical; Signal-anchor for type II membrane protein transmembrane segment spans residues 32–49 (LALVVLLLSAYCLFALPG). Over 50–342 (RCPPAARAPA…QMTGQDFGWD (293 aa)) the chain is Lumenal. Residues 56–75 (RAPAPVPAPAEPPHTSLRLR) form a disordered region. 100–104 (KGGTR) is a binding site for 3'-phosphoadenylyl sulfate. Residues 122–128 (EPHFFDR) and 153–156 (KTPS) contribute to the substrate site. Positions 181 and 189 each coordinate 3'-phosphoadenylyl sulfate. 220-221 (WS) lines the substrate pocket. Asparagine 281 carries N-linked (GlcNAc...) asparagine glycosylation. Cysteine 288 and cysteine 300 are disulfide-bonded. 305–309 (KGRPH) is a 3'-phosphoadenylyl sulfate binding site.

Belongs to the sulfotransferase 1 family. As to expression, expressed in liver and kidney, followed by heart, brain, lung and testis.

It is found in the golgi apparatus membrane. The catalysed reaction is alpha-D-glucosaminyl-[heparan sulfate](n) + 3'-phosphoadenylyl sulfate = 3-sulfo-alpha-D-glucosaminyl-[heparan sulfate](n) + adenosine 3',5'-bisphosphate + H(+). Sulfotransferase that utilizes 3'-phospho-5'-adenylyl sulfate (PAPS) to catalyze the transfer of a sulfo group to heparan sulfate. Unlike 3-OST-1, does not convert non-anticoagulant heparan sulfate to anticoagulant heparan sulfate. The protein is Heparan sulfate glucosamine 3-O-sulfotransferase 6 (Hs3st6) of Mus musculus (Mouse).